The chain runs to 207 residues: Outer-membrane lipoprotein LolB (207 aa).

Positions 1 to 26 are cleaved as a signal peptide; that stretch reads MSKLKIDTKRRFSLLIALVLIISLSS. Cysteine 27 carries the N-palmitoyl cysteine lipid modification. The S-diacylglycerol cysteine moiety is linked to residue cysteine 27.

Belongs to the LolB family. As to quaternary structure, monomer.

Its subcellular location is the cell outer membrane. Its function is as follows. Plays a critical role in the incorporation of lipoproteins in the outer membrane after they are released by the LolA protein. This Francisella tularensis subsp. tularensis (strain FSC 198) protein is Outer-membrane lipoprotein LolB.